Reading from the N-terminus, the 416-residue chain is N-acetyl-L-cysteine deacetylase (416 aa).

The Zn(2+) site is built by C128, H130, E164, H188, and H380.

The protein belongs to the peptidase M20 family. Zn(2+) serves as cofactor. Co(2+) is required as a cofactor.

It catalyses the reaction N-acetyl-L-cysteine + H2O = L-cysteine + acetate. It functions in the pathway amino-acid metabolism. In terms of biological role, involved in a cysteine salvage pathway from S-alkylcysteine. Catalyzes the last step in this pathway, i.e. the deacetylation of N-acetyl-L-cysteine. This pathway is likely important in the catabolism of alkylated cysteine generated by proteolysis of alkylated glutathione formed in the detoxification of a wide range of electrophiles. The chain is N-acetyl-L-cysteine deacetylase from Bacillus subtilis (strain 168).